The chain runs to 95 residues: Small ribosomal subunit protein bS6 (95 aa).

It belongs to the bacterial ribosomal protein bS6 family.

In terms of biological role, binds together with bS18 to 16S ribosomal RNA. In Acholeplasma laidlawii (strain PG-8A), this protein is Small ribosomal subunit protein bS6.